Here is a 457-residue protein sequence, read N- to C-terminus: Casein kinase 1-like protein 11 (457 aa).

The Protein kinase domain maps to 15–284; that stretch reads FKLGRKLGSG…LRRLFRDLFI (270 aa). ATP contacts are provided by residues 21–29 and Lys-44; that span reads LGSGSFGEL. The Proton acceptor role is filled by Asp-134. 2 disordered regions span residues 305–337 and 352–442; these read GSSSRPRPTPRPALDPPGPPAERAEKPTVGQDL and NVSS…EDAI. The segment covering 311–324 has biased composition (pro residues); it reads RPTPRPALDPPGPP. Composition is skewed to polar residues over residues 383 to 403 and 409 to 429; these read NGSTSKRGVISSTRPGSSAEP and SRLFSSGSRHATTQRVPQSYE.

The protein belongs to the protein kinase superfamily. CK1 Ser/Thr protein kinase family. Casein kinase I subfamily. As to quaternary structure, monomer. Post-translationally, autophosphorylated.

It is found in the cytoplasm. It localises to the nucleus. The enzyme catalyses L-seryl-[protein] + ATP = O-phospho-L-seryl-[protein] + ADP + H(+). The catalysed reaction is L-threonyl-[protein] + ATP = O-phospho-L-threonyl-[protein] + ADP + H(+). Partially inhibited by N-(2-aminoethyl)-5-chloroisoquinoline-8-sulfonamide (CKI-7). Functionally, casein kinases are operationally defined by their preferential utilization of acidic proteins such as caseins as substrates. Can phosphorylate casein, phosvitin, myosin light chains and poly(Glu,Tyr) in vitro. The sequence is that of Casein kinase 1-like protein 11 from Arabidopsis thaliana (Mouse-ear cress).